The following is a 117-amino-acid chain: Histone H1-like protein HC1 (117 aa).

The interval 57 to 117 (EKSGLMTRKP…KSSKSRYLRK (61 aa)) is disordered. Residues 66 to 81 (PATKAKKAAATKKAAP) show a composition bias toward basic residues. The segment covering 82–94 (KPKIQAKAAPKAK) has biased composition (low complexity). Residues 95 to 117 (ATTKKTPAKAKAKKSSKSRYLRK) are compositionally biased toward basic residues.

This sequence belongs to the histone H1/H5 family. HCT subfamily.

In terms of biological role, might have a role analogous to that of eukaryotic histone proteins. In Chlamydia psittaci (Chlamydophila psittaci), this protein is Histone H1-like protein HC1 (hctA).